A 616-amino-acid polypeptide reads, in one-letter code: MPKYRSATTTHGRNMAGARALWRATGMTDSDFGKPIIAVVNSFTQFVPGHVHLRDLGKLVAEQIEASGGVAKEFNTIAVDDGIAMGHGGMLYSLPSRELIADSVEYMVNAHCADAMVCISNCDKITPGMLMASLRLNIPVIFVSGGPMEAGKTKLSDKIIKLDLVDAMIQGADPKVSDDQSNQVERSACPTCGSCSGMFTANSMNCLTEALGLSQPGNGSLLATHADRKQLFLNAGKRIVELTKRYYEQNDESALPRNIASKAAFENAMTLDIAMGGSTNTVLHLLAAAQEAEIDFTMSDIDKLSRKVPQLCKVAPSTQKYHMEDVHRAGGVLGILGELDRAGLLNRNVKNVLGLTLPQTLEQYDITVTQDEAVKKMFRAGPAGIRTTQAFSQDCRWDSLDDDRAAGCIRSLEYAYSKDGGLAVLYGNFAENGCIVKTAGVDDSILKFTGPAKVYESQDDAVEAILGGKVVEGDVVVIRYEGPKGGPGMQEMLYPTSFLKSMGLGKACALITDGRFSGGTSGLSIGHVSPEAASGGTIALIEDGDTIAIDIPNRSIQLQLSEAEIAARREAQEARGDKAWTPKNRQRQVSFALRAYASLATSADKGAVRDKSKLGG.

Residue Asp81 coordinates Mg(2+). Cys122 provides a ligand contact to [2Fe-2S] cluster. Mg(2+)-binding residues include Asp123 and Lys124. Lys124 is modified (N6-carboxylysine). Cys195 provides a ligand contact to [2Fe-2S] cluster. Residue Glu491 coordinates Mg(2+). Catalysis depends on Ser517, which acts as the Proton acceptor.

Belongs to the IlvD/Edd family. Homodimer. The cofactor is [2Fe-2S] cluster. Requires Mg(2+) as cofactor.

The enzyme catalyses (2R)-2,3-dihydroxy-3-methylbutanoate = 3-methyl-2-oxobutanoate + H2O. The catalysed reaction is (2R,3R)-2,3-dihydroxy-3-methylpentanoate = (S)-3-methyl-2-oxopentanoate + H2O. It functions in the pathway amino-acid biosynthesis; L-isoleucine biosynthesis; L-isoleucine from 2-oxobutanoate: step 3/4. It participates in amino-acid biosynthesis; L-valine biosynthesis; L-valine from pyruvate: step 3/4. Functionally, functions in the biosynthesis of branched-chain amino acids. Catalyzes the dehydration of (2R,3R)-2,3-dihydroxy-3-methylpentanoate (2,3-dihydroxy-3-methylvalerate) into 2-oxo-3-methylpentanoate (2-oxo-3-methylvalerate) and of (2R)-2,3-dihydroxy-3-methylbutanoate (2,3-dihydroxyisovalerate) into 2-oxo-3-methylbutanoate (2-oxoisovalerate), the penultimate precursor to L-isoleucine and L-valine, respectively. The protein is Dihydroxy-acid dehydratase of Salmonella agona (strain SL483).